A 191-amino-acid polypeptide reads, in one-letter code: Transposon Tn1546 resolvase (191 aa).

One can recognise a Resolvase/invertase-type recombinase catalytic domain in the interval 2–138 (RKIGYIRVSS…EGIELAKKEG (137 aa)). Serine 10 acts as the O-(5'-phospho-DNA)-serine intermediate in catalysis. The segment at residues 168–187 (VNQICEITNVSRASLYRKLS) is a DNA-binding region (H-T-H motif).

This sequence belongs to the site-specific recombinase resolvase family.

Functionally, resolvase catalyzes the resolution (a site-specific recombination) of the cointegrated replicon to yield the final transposition products. The polypeptide is Transposon Tn1546 resolvase (Enterococcus faecium (Streptococcus faecium)).